Consider the following 157-residue polypeptide: SsrA-binding protein (157 aa).

The disordered stretch occupies residues 132–157 (VHDKRQAQKDKDWAREKDRLFKKAYK). The segment covering 135–157 (KRQAQKDKDWAREKDRLFKKAYK) has biased composition (basic and acidic residues).

This sequence belongs to the SmpB family.

The protein localises to the cytoplasm. Its function is as follows. Required for rescue of stalled ribosomes mediated by trans-translation. Binds to transfer-messenger RNA (tmRNA), required for stable association of tmRNA with ribosomes. tmRNA and SmpB together mimic tRNA shape, replacing the anticodon stem-loop with SmpB. tmRNA is encoded by the ssrA gene; the 2 termini fold to resemble tRNA(Ala) and it encodes a 'tag peptide', a short internal open reading frame. During trans-translation Ala-aminoacylated tmRNA acts like a tRNA, entering the A-site of stalled ribosomes, displacing the stalled mRNA. The ribosome then switches to translate the ORF on the tmRNA; the nascent peptide is terminated with the 'tag peptide' encoded by the tmRNA and targeted for degradation. The ribosome is freed to recommence translation, which seems to be the essential function of trans-translation. The protein is SsrA-binding protein of Francisella tularensis subsp. novicida (strain U112).